Consider the following 437-residue polypeptide: Enolase (437 aa).

Q162 serves as a coordination point for (2R)-2-phosphoglycerate. The active-site Proton donor is the E204. Positions 251, 297, and 324 each coordinate Mg(2+). The (2R)-2-phosphoglycerate site is built by K349, R378, S379, and K400. K349 serves as the catalytic Proton acceptor.

The protein belongs to the enolase family. The cofactor is Mg(2+).

It localises to the cytoplasm. It is found in the secreted. Its subcellular location is the cell surface. The enzyme catalyses (2R)-2-phosphoglycerate = phosphoenolpyruvate + H2O. Its pathway is carbohydrate degradation; glycolysis; pyruvate from D-glyceraldehyde 3-phosphate: step 4/5. In terms of biological role, catalyzes the reversible conversion of 2-phosphoglycerate (2-PG) into phosphoenolpyruvate (PEP). It is essential for the degradation of carbohydrates via glycolysis. The chain is Enolase from Chlorobium limicola (strain DSM 245 / NBRC 103803 / 6330).